Consider the following 98-residue polypeptide: Bombyxin A-3 homolog (98 aa).

Positions 1 to 18 are cleaved as a signal peptide; that stretch reads MRTQVLFLVLEVAAMASG. Cystine bridges form between cysteine 26-cysteine 85, cysteine 38-cysteine 98, and cysteine 84-cysteine 89. A propeptide spans 47–75 (c peptide like); sequence TPYTSSESEGYGWRWLAPQRARQLAGARG.

Belongs to the insulin family. In terms of assembly, heterodimer of a B chain and an A chain linked by two disulfide bonds.

The protein resides in the secreted. Brain peptide responsible for activation of prothoracic glands to produce ecdysone in insects. The chain is Bombyxin A-3 homolog (SBXA3) from Samia cynthia (Ailanthus silkmoth).